Here is a 74-residue protein sequence, read N- to C-terminus: Exodeoxyribonuclease 7 small subunit (74 aa).

The protein belongs to the XseB family. In terms of assembly, heterooligomer composed of large and small subunits.

It localises to the cytoplasm. The catalysed reaction is Exonucleolytic cleavage in either 5'- to 3'- or 3'- to 5'-direction to yield nucleoside 5'-phosphates.. Its function is as follows. Bidirectionally degrades single-stranded DNA into large acid-insoluble oligonucleotides, which are then degraded further into small acid-soluble oligonucleotides. This is Exodeoxyribonuclease 7 small subunit from Actinobacillus pleuropneumoniae serotype 5b (strain L20).